We begin with the raw amino-acid sequence, 527 residues long: Bifunctional purine biosynthesis protein PurH (527 aa).

The 149-residue stretch at 8–156 folds into the MGS-like domain; it reads AGAKRPIRRA…KNHPSVAVVV (149 aa).

It belongs to the PurH family.

It catalyses the reaction (6R)-10-formyltetrahydrofolate + 5-amino-1-(5-phospho-beta-D-ribosyl)imidazole-4-carboxamide = 5-formamido-1-(5-phospho-D-ribosyl)imidazole-4-carboxamide + (6S)-5,6,7,8-tetrahydrofolate. The catalysed reaction is IMP + H2O = 5-formamido-1-(5-phospho-D-ribosyl)imidazole-4-carboxamide. The protein operates within purine metabolism; IMP biosynthesis via de novo pathway; 5-formamido-1-(5-phospho-D-ribosyl)imidazole-4-carboxamide from 5-amino-1-(5-phospho-D-ribosyl)imidazole-4-carboxamide (10-formyl THF route): step 1/1. It functions in the pathway purine metabolism; IMP biosynthesis via de novo pathway; IMP from 5-formamido-1-(5-phospho-D-ribosyl)imidazole-4-carboxamide: step 1/1. The protein is Bifunctional purine biosynthesis protein PurH of Mycobacterium sp. (strain JLS).